The chain runs to 848 residues: Xylosyltransferase (848 aa).

Over 1 to 14 (MSLHRTLRRFLRKW) the chain is Cytoplasmic. Residues 15–35 (KALVYAVSFILLIQAFFTFQS) traverse the membrane as a helical; Signal-anchor for type II membrane protein segment. At 36-843 (SPNLMEEEHL…PKTELISVKP (808 aa)) the chain is on the lumenal side. Disulfide bonds link Cys145-Cys173, Cys189-Cys427, Cys446-Cys459, and Cys448-Cys457. UDP-alpha-D-xylose-binding positions include Val219, Asp247, and 276 to 278 (TIW). The N-linked (GlcNAc...) asparagine glycan is linked to Asn306. 379–380 (DW) contributes to the UDP-alpha-D-xylose binding site. Residues Ser460 and 482 to 483 (RK) each bind UDP-alpha-D-xylose. 2 disulfide bridges follow: Cys529-Cys811 and Cys794-Cys822. An N-linked (GlcNAc...) asparagine glycan is attached at Asn530. Positions 824 to 848 (NTNWSSLSPDPKTELISVKPDGRIR) are disordered. N-linked (GlcNAc...) asparagine glycosylation occurs at Asn826.

This sequence belongs to the glycosyltransferase 14 family. XylT subfamily. A divalent metal cation is required as a cofactor.

The protein localises to the endoplasmic reticulum membrane. It is found in the golgi apparatus membrane. The catalysed reaction is UDP-alpha-D-xylose + L-seryl-[protein] = 3-O-(beta-D-xylosyl)-L-seryl-[protein] + UDP + H(+). It participates in glycan metabolism; chondroitin sulfate biosynthesis. It functions in the pathway glycan metabolism; heparan sulfate biosynthesis. Its function is as follows. Catalyzes the first step in biosynthesis of glycosaminoglycan. Transfers D-xylose from UDP-D-xylose to specific serine residues of the core protein. Initial enzyme in the biosynthesis of chondroitin sulfate and dermatan sulfate proteoglycans in fibroblasts and chondrocytes. This Ciona intestinalis (Transparent sea squirt) protein is Xylosyltransferase (xt).